Here is a 126-residue protein sequence, read N- to C-terminus: 13 kDa ribonucleoprotein-associated protein (126 aa).

The protein belongs to the eukaryotic ribosomal protein eL8 family. As to quaternary structure, component of the U3 snoRNP particle. Binds to the C'/D and B/C motifs in U3 snoRNA. Component of the 25S U4/U6.U5 tri-snRNP particle, a subcomplex of the spliceosome. Binds to the 5' stem-loop of U4 snRNA.

It is found in the nucleus. The protein resides in the nucleolus. In terms of biological role, common component of the spliceosome and rRNA processing machinery. In association with the spliceosomal U4/U6.U5 tri-snRNP particle, required for splicing of pre-mRNA. In association with box C/D snoRNPs, required for processing of pre-ribosomal RNA (rRNA) and site-specific 2'-O-methylation of substrate RNAs. Essential for the accumulation and stability of U4 snRNA, U6 snRNA, and box C/D snoRNAs. The polypeptide is 13 kDa ribonucleoprotein-associated protein (SNU13) (Kluyveromyces lactis (strain ATCC 8585 / CBS 2359 / DSM 70799 / NBRC 1267 / NRRL Y-1140 / WM37) (Yeast)).